Reading from the N-terminus, the 138-residue chain is MLQPSRRKYRKEQKGRNTGLASRGTHVSFGEFGLKATGRGRLTARQIEAARRAINRHIKRGGRIWIRIFPDKPISQKPAEVRMGNGKGNPEYWVAEIQPGKVLYEMEGVSEELAREAFRLAAAKLPISTTFVARHIGA.

Over residues 1–13 (MLQPSRRKYRKEQ) the composition is skewed to basic residues. The segment at 1-24 (MLQPSRRKYRKEQKGRNTGLASRG) is disordered.

This sequence belongs to the universal ribosomal protein uL16 family. Part of the 50S ribosomal subunit.

Its function is as follows. Binds 23S rRNA and is also seen to make contacts with the A and possibly P site tRNAs. The polypeptide is Large ribosomal subunit protein uL16 (Bordetella bronchiseptica (strain ATCC BAA-588 / NCTC 13252 / RB50) (Alcaligenes bronchisepticus)).